A 338-amino-acid chain; its full sequence is Uroporphyrinogen decarboxylase (338 aa).

Residues 27-31 (RQAGR), aspartate 77, tyrosine 151, serine 203, and histidine 317 each bind substrate.

This sequence belongs to the uroporphyrinogen decarboxylase family. As to quaternary structure, homodimer.

It localises to the cytoplasm. It catalyses the reaction uroporphyrinogen III + 4 H(+) = coproporphyrinogen III + 4 CO2. The protein operates within porphyrin-containing compound metabolism; protoporphyrin-IX biosynthesis; coproporphyrinogen-III from 5-aminolevulinate: step 4/4. Functionally, catalyzes the decarboxylation of four acetate groups of uroporphyrinogen-III to yield coproporphyrinogen-III. This is Uroporphyrinogen decarboxylase from Wolbachia sp. subsp. Drosophila simulans (strain wRi).